The sequence spans 231 residues: ATP-dependent dethiobiotin synthetase BioD 2 (231 aa).

ATP is bound at residue 13 to 18 (SVGKTV). Residue Thr-17 coordinates Mg(2+). Residue Lys-38 is part of the active site. ATP is bound by residues Asp-55, 112–115 (EGTG), 172–173 (NR), 201–203 (PYL), and Gln-208. 2 residues coordinate Mg(2+): Asp-55 and Glu-112.

The protein belongs to the dethiobiotin synthetase family. As to quaternary structure, homodimer. It depends on Mg(2+) as a cofactor.

It localises to the cytoplasm. It catalyses the reaction (7R,8S)-7,8-diammoniononanoate + CO2 + ATP = (4R,5S)-dethiobiotin + ADP + phosphate + 3 H(+). It functions in the pathway cofactor biosynthesis; biotin biosynthesis; biotin from 7,8-diaminononanoate: step 1/2. Catalyzes a mechanistically unusual reaction, the ATP-dependent insertion of CO2 between the N7 and N8 nitrogen atoms of 7,8-diaminopelargonic acid (DAPA, also called 7,8-diammoniononanoate) to form a ureido ring. This Salmonella typhi protein is ATP-dependent dethiobiotin synthetase BioD 2.